The following is a 96-amino-acid chain: Large ribosomal subunit protein uL23 (96 aa).

Belongs to the universal ribosomal protein uL23 family. As to quaternary structure, part of the 50S ribosomal subunit. Contacts protein L29, and trigger factor when it is bound to the ribosome.

Functionally, one of the early assembly proteins it binds 23S rRNA. One of the proteins that surrounds the polypeptide exit tunnel on the outside of the ribosome. Forms the main docking site for trigger factor binding to the ribosome. The chain is Large ribosomal subunit protein uL23 from Vesicomyosocius okutanii subsp. Calyptogena okutanii (strain HA).